The sequence spans 202 residues: Small ribosomal subunit protein uS4c (202 aa).

The 64-residue stretch at 90 to 153 (MRLDNIIFRL…KSEAIISKNI (64 aa)) folds into the S4 RNA-binding domain.

The protein belongs to the universal ribosomal protein uS4 family. Part of the 30S ribosomal subunit. Contacts protein S5. The interaction surface between S4 and S5 is involved in control of translational fidelity.

Its subcellular location is the plastid. The protein localises to the chloroplast. One of the primary rRNA binding proteins, it binds directly to 16S rRNA where it nucleates assembly of the body of the 30S subunit. Its function is as follows. With S5 and S12 plays an important role in translational accuracy. The chain is Small ribosomal subunit protein uS4c (rps4) from Leucodon sciuroides (Moss).